Reading from the N-terminus, the 230-residue chain is 3-isopropylmalate dehydratase small subunit (230 aa).

Belongs to the LeuD family. LeuD type 1 subfamily. Heterodimer of LeuC and LeuD.

It catalyses the reaction (2R,3S)-3-isopropylmalate = (2S)-2-isopropylmalate. Its pathway is amino-acid biosynthesis; L-leucine biosynthesis; L-leucine from 3-methyl-2-oxobutanoate: step 2/4. Its function is as follows. Catalyzes the isomerization between 2-isopropylmalate and 3-isopropylmalate, via the formation of 2-isopropylmaleate. The polypeptide is 3-isopropylmalate dehydratase small subunit (Bifidobacterium longum (strain DJO10A)).